The following is a 220-amino-acid chain: Miraculin (220 aa).

An N-terminal signal peptide occupies residues 1-29 (MKELTMLSLSFFFVSALLAAAANPLLSAA). Asparagine 71 carries an N-linked (GlcNAc...) asparagine glycan. 3 cysteine pairs are disulfide-bonded: cysteine 76/cysteine 121, cysteine 177/cysteine 188, and cysteine 181/cysteine 184. Asparagine 215 carries N-linked (GlcNAc...) asparagine glycosylation.

It belongs to the protease inhibitor I3 (leguminous Kunitz-type inhibitor) family. In terms of assembly, homotetramer; dimer of homodimer. Glycosylated; contains as much as 13,9% of sugars (glucosamine, mannose, galactose, xylose, and fucose). Expressed in fruit pulp after pollination. Not expressed in seeds, stems or leaves.

Miraculin has the property of modifying a sour taste into a sweet taste. This alteration of taste perception persists for many minutes. The protein is Miraculin of Synsepalum dulcificum (Miracle fruit).